Reading from the N-terminus, the 886-residue chain is Conserved oligomeric Golgi complex subunit 1 (886 aa).

Residues 834–846 (SAERKSPIQEPVE) show a composition bias toward basic and acidic residues. Residues 834 to 886 (SAERKSPIQEPVEKTATTTPTRKSGGNGARKGDSSKSKSSAASFFGMSQEWFR) form a disordered region. Residue Ser-839 is modified to Phosphoserine. A compositionally biased stretch (polar residues) spans 848–857 (TATTTPTRKS).

It belongs to the COG1 family. Component of the conserved oligomeric Golgi complex which is composed of eight different subunits and is required for normal Golgi morphology and localization.

Its subcellular location is the golgi apparatus membrane. Its function is as follows. Required for normal Golgi function. This Drosophila melanogaster (Fruit fly) protein is Conserved oligomeric Golgi complex subunit 1.